An 87-amino-acid polypeptide reads, in one-letter code: U3-theraphotoxin-Hhn1a 18 (87 aa).

The signal sequence occupies residues 1–24; the sequence is MVNTKASMFLTFAGLVLLFVVCYA. Positions 25-52 are excised as a propeptide; sequence SESEEKEFPKEMLSSIFAVDNDFKQEER. Intrachain disulfides connect Cys54-Cys67, Cys61-Cys72, and Cys66-Cys79.

It belongs to the neurotoxin 10 (Hwtx-1) family. 51 (Hntx-8) subfamily. Hntx-8 sub-subfamily. In terms of tissue distribution, expressed by the venom gland.

Its subcellular location is the secreted. In terms of biological role, ion channel inhibitor. The chain is U3-theraphotoxin-Hhn1a 18 from Cyriopagopus hainanus (Chinese bird spider).